The sequence spans 243 residues: MSATDRYSHQLLYATVRQRLLDDIAQGVYQAGQQIPTENELCTQYNVSRITIRKAISDLVADGVLIRWQGKGTFVQSQKVENALLTVSGFTDFGVSQGKATKEKVIEQERVSAAPFCEKLNIPGNSEVFHLCRVMYLDKEPLFIDSSWIPLSRYPDFDEIYVEGSSTYQLFQERFDTRVVSDKKTIDIFAATRPQAKWLKCELGEPLFRISKIAFDQNDKPVHVSELFCRANRITLTIDNKRH.

Residues Gln-10–Gln-78 form the HTH gntR-type domain. Residues Glu-38 to Ser-57 constitute a DNA-binding region (H-T-H motif).

It participates in carbohydrate metabolism; fructoselysine degradation [regulation]. Functionally, may regulate the transcription of the frlABCDR operon, involved in the utilization of fructoselysine and psicoselysine. The sequence is that of Probable fructoselysine utilization operon transcriptional repressor from Escherichia coli (strain K12).